The chain runs to 606 residues: 4-hydroxy-3-methylbut-2-en-1-yl diphosphate synthase (flavodoxin) (606 aa).

4 residues coordinate [4Fe-4S] cluster: cysteine 513, cysteine 516, cysteine 547, and glutamate 554.

It belongs to the IspG family. [4Fe-4S] cluster serves as cofactor.

The catalysed reaction is (2E)-4-hydroxy-3-methylbut-2-enyl diphosphate + oxidized [flavodoxin] + H2O + 2 H(+) = 2-C-methyl-D-erythritol 2,4-cyclic diphosphate + reduced [flavodoxin]. The protein operates within isoprenoid biosynthesis; isopentenyl diphosphate biosynthesis via DXP pathway; isopentenyl diphosphate from 1-deoxy-D-xylulose 5-phosphate: step 5/6. Functionally, converts 2C-methyl-D-erythritol 2,4-cyclodiphosphate (ME-2,4cPP) into 1-hydroxy-2-methyl-2-(E)-butenyl 4-diphosphate. This is 4-hydroxy-3-methylbut-2-en-1-yl diphosphate synthase (flavodoxin) from Chlamydia caviae (strain ATCC VR-813 / DSM 19441 / 03DC25 / GPIC) (Chlamydophila caviae).